A 364-amino-acid chain; its full sequence is MSVMVVRKKVTRKWEKLPGRNTFCCDGRVMMARQKGIFYLTLFLILGTCTLFFAFECRYLAVQLSPAIPVFAAMLFLFSMATLLRTSFSDPGVIPRALPDEAAFIEMEIEATNGAVPQGQRPPPRIKNFQINNQIVKLKYCYTCKIFRPPRASHCSICDNCVERFDHHCPWVGNCVGKRNYRYFYLFILSLSLLTIYVFAFNIVYVALKSLKIGFLETLKETPGTVLEVLICFFTLWSVVGLTGFHTFLVALNQTTNEDIKGSWTGKNRVQNPYSHGNIVKNCCEVLCGPLPPSVLDRRGILPLEESGSRPPSTQETSSSLLPQSPAPTEHLNSNEMPEDSSTPEEMPPPEPPEPPQEAAEAEK.

Over 1-35 (MSVMVVRKKVTRKWEKLPGRNTFCCDGRVMMARQK) the chain is Cytoplasmic. A helical transmembrane segment spans residues 36 to 56 (GIFYLTLFLILGTCTLFFAFE). At 57–63 (CRYLAVQ) the chain is on the lumenal side. A helical transmembrane segment spans residues 64–84 (LSPAIPVFAAMLFLFSMATLL). Residues 85-183 (RTSFSDPGVI…NCVGKRNYRY (99 aa)) are Cytoplasmic-facing. The 51-residue stretch at 139–189 (KYCYTCKIFRPPRASHCSICDNCVERFDHHCPWVGNCVGKRNYRYFYLFIL) folds into the DHHC domain. Cys-169 functions as the S-palmitoyl cysteine intermediate in the catalytic mechanism. Residues 184-204 (FYLFILSLSLLTIYVFAFNIV) form a helical membrane-spanning segment. At 205 to 228 (YVALKSLKIGFLETLKETPGTVLE) the chain is on the lumenal side. A helical membrane pass occupies residues 229–249 (VLICFFTLWSVVGLTGFHTFL). The Cytoplasmic portion of the chain corresponds to 250–364 (VALNQTTNED…PPQEAAEAEK (115 aa)). Residues 303–364 (PLEESGSRPP…PPQEAAEAEK (62 aa)) are disordered. The segment covering 310–323 (RPPSTQETSSSLLP) has biased composition (polar residues). Residues 346–356 (EMPPPEPPEPP) show a composition bias toward pro residues.

This sequence belongs to the DHHC palmitoyltransferase family. ERF2/ZDHHC9 subfamily. Interacts with GOLGA7. In terms of tissue distribution, highly expressed in kidney, skeletal muscle, brain, lung and liver. Absent in thymus, spleen and leukocytes.

It localises to the endoplasmic reticulum membrane. The protein resides in the golgi apparatus membrane. The catalysed reaction is L-cysteinyl-[protein] + hexadecanoyl-CoA = S-hexadecanoyl-L-cysteinyl-[protein] + CoA. Palmitoyltransferase that catalyzes the addition of palmitate onto various protein substrates, such as ADRB2, GSDMD, HRAS, NRAS and CGAS. The ZDHHC9-GOLGA7 complex is a palmitoyltransferase specific for HRAS and NRAS. May have a palmitoyltransferase activity toward the beta-2 adrenergic receptor/ADRB2 and therefore regulate G protein-coupled receptor signaling. Acts as a regulator of innate immunity by catalyzing palmitoylation of CGAS, thereby promoting CGAS homodimerization and cyclic GMP-AMP synthase activity. Activates pyroptosis by catalyzing palmitoylation of gasdermin-D (GSDMD), thereby promoting membrane translocation and pore formation of GSDMD. Functionally, (Microbial infection) Through a sequential action with ZDHHC20, rapidly and efficiently palmitoylates SARS coronavirus-2/SARS-CoV-2 spike protein following its synthesis in the endoplasmic reticulum (ER). In the infected cell, promotes spike biogenesis by protecting it from premature ER degradation, increases half-life and controls the lipid organization of its immediate membrane environment. Once the virus has formed, spike palmitoylation controls fusion with the target cell. This is Palmitoyltransferase ZDHHC9 from Homo sapiens (Human).